A 539-amino-acid chain; its full sequence is Probable K(+)/H(+) antiporter subunit D (539 aa).

The next 14 helical transmembrane spans lie at 4-23 (WLDHLLILPILLPLAVAAVL), 36-58 (AIGFASTLVVFILSMILMRLAAA), 78-100 (FGIVLVLDRLSALMLCLTSGLAL), 113-135 (AGHHFHSLFQLLVAGLNGAFLTG), 140-162 (LFVFFEMMLAASYGLLLHGSGPL), 175-197 (LAASALFLIGVSLIYGAAGTLNM), 217-239 (MGSAILGVAFLVKAGMWPLSFWL), 251-273 (AGVFAVLTKVGIYVIIRLHLLVF), 283-305 (FGQEWLVTGGMLTIAFGGIGVLA), 312-331 (LAGYSVLVSSGTLLAAVGLG), 335-357 (MLAGALFYLVSSTLTIGAFFLLI), 400-422 (VLGLCFCLCALLLAGLPPLSGFI), 442-464 (AMSAADWTYVTLLILSGLAAMIA), and 484-506 (VVVIEITPVVVLLGACIFLSLQA).

This sequence belongs to the CPA3 antiporters (TC 2.A.63) subunit D family. May form a hetero-oligomeric complex that consists of six subunits: PhaAB, PhaC, PhaD, PhaE, PhaF and PhaG.

It localises to the cell membrane. In terms of biological role, part of a K(+) efflux system which is required for the adaptation of R.meliloti to alkaline pH as well as for the infection process during symbiotic nodule development. This chain is Probable K(+)/H(+) antiporter subunit D (phaD), found in Rhizobium meliloti (strain 1021) (Ensifer meliloti).